Here is a 199-residue protein sequence, read N- to C-terminus: Neurotrophic factor BDNF precursor form (199 aa).

The disordered stretch occupies residues 1–23 (GQGSLAYPGLRTQGNLETLSGPN). The propeptide occupies 1–100 (GQGSLAYPGL…AANMSMRVRR (100 aa)). Residues 12–23 (TQGNLETLSGPN) show a composition bias toward polar residues. A glycan (N-linked (GlcNAc...) asparagine) is linked at N93. C113 and C180 are oxidised to a cystine.

It belongs to the NGF-beta family.

The protein resides in the secreted. Promotes the survival of neuronal populations that are all located either in the central nervous system or directly connected to it. The protein is Neurotrophic factor BDNF precursor form (BDNF) of Morelia spilota (Carpet python).